The following is a 371-amino-acid chain: Protein lifeguard 1 (371 aa).

Residues 1-145 form a disordered region; sequence MSHEKSFLVS…EGPPSYYDNQ (145 aa). Positions 14 to 49 are enriched in pro residues; it reads YPPPNPGYPGGPQPPMPPYAQPPYPGAPYPQPPFQP. Over residues 84-98 the composition is skewed to low complexity; it reads YPQEGYPQGPYPQGG. The span at 102–114 shows a compositional bias: pro residues; sequence GPYPQSPFPPNPY. 7 helical membrane-spanning segments follow: residues 165-185, 197-217, 228-248, 253-273, 283-303, 307-327, and 346-366; these read VFLV…VFTF, VWTY…LSCC, LVAL…IASF, AVIM…IFSM, MGVL…CIFI, ILEI…LAVD, and FAAL…LTII.

This sequence belongs to the BI1 family. LFG subfamily.

The protein localises to the membrane. Potential apoptotic regulator. This is Protein lifeguard 1 (GRINA) from Homo sapiens (Human).